Reading from the N-terminus, the 767-residue chain is Cation/H(+) antiporter 27 (767 aa).

Transmembrane regions (helical) follow at residues 39 to 59 (LPLL…FQFL), 63 to 83 (FGKF…PSVI), 99 to 119 (VYII…ITTC), 135 to 155 (INGI…AILI), 173 to 193 (HVAI…LSSL), 205 to 225 (LASM…NIAI), 242 to 262 (VLQM…MLWM), 280 to 300 (ICVL…PYFF), 323 to 343 (IGCF…GLNI), 371 to 391 (IALP…VGFI), and 415 to 435 (KSFG…IVIV).

Belongs to the monovalent cation:proton antiporter 2 (CPA2) transporter (TC 2.A.37) family. CHX (TC 2.A.37.4) subfamily. In terms of tissue distribution, specifically expressed in pollen.

It is found in the membrane. Its function is as follows. May operate as a cation/H(+) antiporter. The sequence is that of Cation/H(+) antiporter 27 (CHX27) from Arabidopsis thaliana (Mouse-ear cress).